Reading from the N-terminus, the 126-residue chain is uncharacterized protein (126 aa).

The interval 1-46 is disordered; the sequence is MREEEAAAVVTVPQAGRDGEQPGPPAGLGCAAVRGEPGGGGPQESR.

It is found in the cytoplasm. It localises to the cytoskeleton. The protein resides in the cilium basal body. This is an uncharacterized protein from Bos taurus (Bovine).